Reading from the N-terminus, the 159-residue chain is 2-C-methyl-D-erythritol 2,4-cyclodiphosphate synthase (159 aa).

A divalent metal cation contacts are provided by D8 and H10. Residues D8 to H10 and H34 to S35 contribute to the 4-CDP-2-C-methyl-D-erythritol 2-phosphate site. H42 serves as a coordination point for a divalent metal cation. 4-CDP-2-C-methyl-D-erythritol 2-phosphate contacts are provided by residues D56–G58, F61–D65, F139, and R142.

The protein belongs to the IspF family. In terms of assembly, homotrimer. A divalent metal cation is required as a cofactor.

The enzyme catalyses 4-CDP-2-C-methyl-D-erythritol 2-phosphate = 2-C-methyl-D-erythritol 2,4-cyclic diphosphate + CMP. It participates in isoprenoid biosynthesis; isopentenyl diphosphate biosynthesis via DXP pathway; isopentenyl diphosphate from 1-deoxy-D-xylulose 5-phosphate: step 4/6. Involved in the biosynthesis of isopentenyl diphosphate (IPP) and dimethylallyl diphosphate (DMAPP), two major building blocks of isoprenoid compounds. Catalyzes the conversion of 4-diphosphocytidyl-2-C-methyl-D-erythritol 2-phosphate (CDP-ME2P) to 2-C-methyl-D-erythritol 2,4-cyclodiphosphate (ME-CPP) with a corresponding release of cytidine 5-monophosphate (CMP). In Syntrophus aciditrophicus (strain SB), this protein is 2-C-methyl-D-erythritol 2,4-cyclodiphosphate synthase.